The sequence spans 413 residues: Azaphilone biosynthesis cluster protein M (413 aa).

Over residues 123–138 the composition is skewed to polar residues; that stretch reads STQPDQVQPNQPTPSF. The interval 123–145 is disordered; it reads STQPDQVQPNQPTPSFESAAGAS.

It functions in the pathway secondary metabolite biosynthesis. Functionally, part of the gene cluster that mediates the biosynthesis of azaterrilone A and other azaphilones, a class of fungal metabolites characterized by a highly oxygenated pyrano-quinone bicyclic core and exhibiting a broad range of bioactivities. The first step of the pathway begins with the non-reducing polyketide synthase tazA that assembles one acetyl-CoA starter unit, five malonyl-CoA units, and catalyzes a series of Claisen condensations, methylation, PT-mediated cyclization, and finally releases the first hexaketide precursor through the R-domain. The tazA product then undergoes reduction on its terminal ketone and the following pyran-ring formation by yet undetermined enzyme(s). Dehydration and enoyl reduction, possibly involving the trans-enoyl reductase tazE leads to the next intermediate. TazD is predicted as an acetyltransferase and might catalyze the acetylation steps leading to the synthesis of azaterrilone A. Azaterrilone A is not the final product of the taz pathway and both the highly reducing polyketide synthase tazB and the dual enzyme tazHJ catalyze late steps of the pathway, leading to the production of the 2 final stereoisomers that contain additional polyketide modification whose structures have still to be determined. In Aspergillus terreus (strain NIH 2624 / FGSC A1156), this protein is Azaphilone biosynthesis cluster protein M.